We begin with the raw amino-acid sequence, 347 residues long: CRISPR-associated endonuclease Cas1 4 (347 aa).

Basic and acidic residues predominate over residues 1–21 (MNIENEVHIENASESKREPKP). The tract at residues 1–25 (MNIENEVHIENASESKREPKPPEGL) is disordered. Residues glutamate 176, histidine 241, and glutamate 256 each contribute to the Mn(2+) site.

This sequence belongs to the CRISPR-associated endonuclease Cas1 family. As to quaternary structure, homodimer, forms a heterotetramer with a Cas2 homodimer. It depends on Mg(2+) as a cofactor. Requires Mn(2+) as cofactor.

CRISPR (clustered regularly interspaced short palindromic repeat), is an adaptive immune system that provides protection against mobile genetic elements (viruses, transposable elements and conjugative plasmids). CRISPR clusters contain spacers, sequences complementary to antecedent mobile elements, and target invading nucleic acids. CRISPR clusters are transcribed and processed into CRISPR RNA (crRNA). Acts as a dsDNA endonuclease. Involved in the integration of spacer DNA into the CRISPR cassette. This is CRISPR-associated endonuclease Cas1 4 from Methanospirillum hungatei JF-1 (strain ATCC 27890 / DSM 864 / NBRC 100397 / JF-1).